Reading from the N-terminus, the 152-residue chain is Ribosome maturation factor RimP (152 aa).

The protein belongs to the RimP family.

Its subcellular location is the cytoplasm. Functionally, required for maturation of 30S ribosomal subunits. In Burkholderia vietnamiensis (strain G4 / LMG 22486) (Burkholderia cepacia (strain R1808)), this protein is Ribosome maturation factor RimP.